A 156-amino-acid polypeptide reads, in one-letter code: CRIB domain-containing protein RIC10 (156 aa).

The region spanning I30 to G43 is the CRIB domain. Positions R68–P77 are enriched in polar residues. The interval R68–I156 is disordered. A compositionally biased stretch (low complexity) spans S78–Q96. Residues N117 to S128 show a composition bias toward basic residues. Low complexity predominate over residues S129–I156.

In terms of tissue distribution, expressed in roots, leaves, flowers and pollen.

Its subcellular location is the cytoplasm. Its function is as follows. Functions as a downstream effector of Rho-related GTP binding proteins of the 'Rho of Plants' (ROPs) family. Participates in the propagation of ROP GTPase signals in specific cellular responses. Is involved in pollen tube growth regulation. This chain is CRIB domain-containing protein RIC10 (RIC10), found in Arabidopsis thaliana (Mouse-ear cress).